A 167-amino-acid chain; its full sequence is MRCGPLCRFLWLWPYLSCVEAVPIRKVQDDTKTLIKTIVARINDISHTQSVSSKQRVAGLDFIPGLQPVLSLSRMDQTLAIYQQILNSLHSRNVVQISNDLENLRDLLHLLASSKSCPLPRARGLETFESLGGVLEASLYSTEVVALNRLQAALQDMLRRLDLSPGC.

The signal sequence occupies residues 1–21 (MRCGPLCRFLWLWPYLSCVEA). An intrachain disulfide couples cysteine 117 to cysteine 167.

The protein belongs to the leptin family.

The protein resides in the secreted. In terms of biological role, key player in the regulation of energy balance and body weight control. Once released into the circulation, has central and peripheral effects by binding LEPR, found in many tissues, which results in the activation of several major signaling pathways. In the hypothalamus, acts as an appetite-regulating factor that induces a decrease in food intake and an increase in energy consumption by inducing anorexinogenic factors and suppressing orexigenic neuropeptides, also regulates bone mass and secretion of hypothalamo-pituitary-adrenal hormones. In the periphery, increases basal metabolism, influences reproductive function, regulates pancreatic beta-cell function and insulin secretion, is pro-angiogenic for endothelial cell and affects innate and adaptive immunity. In the arcuate nucleus of the hypothalamus, activates by depolarization POMC neurons inducing FOS and SOCS3 expression to release anorexigenic peptides and inhibits by hyperpolarization NPY neurons inducing SOCS3 with a consequent reduction on release of orexigenic peptides. In addition to its known satiety inducing effect, has a modulatory role in nutrient absorption. In the intestine, reduces glucose absorption by enterocytes by activating PKC and leading to a sequential activation of p38, PI3K and ERK signaling pathways which exerts an inhibitory effect on glucose absorption. Acts as a growth factor on certain tissues, through the activation of different signaling pathways increases expression of genes involved in cell cycle regulation such as CCND1, via JAK2-STAT3 pathway, or VEGFA, via MAPK1/3 and PI3K-AKT1 pathways. May also play an apoptotic role via JAK2-STAT3 pathway and up-regulation of BIRC5 expression. Pro-angiogenic, has mitogenic activity on vascular endothelial cells and plays a role in matrix remodeling by regulating the expression of matrix metalloproteinases (MMPs) and tissue inhibitors of metalloproteinases (TIMPs). In innate immunity, modulates the activity and function of neutrophils by increasing chemotaxis and the secretion of oxygen radicals. Increases phagocytosis by macrophages and enhances secretion of pro-inflammatory mediators. Increases cytotoxic ability of NK cells. Plays a pro-inflammatory role, in synergy with IL1B, by inducing NOS2 which promotes the production of IL6, IL8 and Prostaglandin E2, through a signaling pathway that involves JAK2, PI3K, MAP2K1/MEK1 and MAPK14/p38. In adaptive immunity, promotes the switch of memory T-cells towards T helper-1 cell immune responses. Increases CD4(+)CD25(-) T-cell proliferation and reduces autophagy during TCR (T-cell receptor) stimulation, through MTOR signaling pathway activation and BCL2 up-regulation. This is Leptin (LEP) from Canis lupus familiaris (Dog).